We begin with the raw amino-acid sequence, 169 residues long: Neurotensin/neuromedin N (169 aa).

Residues 1-22 (MRGMNLQLVCLTLLAFSSWSLC) form the signal peptide.

Belongs to the neurotensin family. As to quaternary structure, interacts with NTSR1. Interacts with SORT1. Interacts with SORL1. Neurotensin is cleaved and degraded by Angiotensin-converting enzyme (ACE) and neprilysin (MME).

It is found in the secreted. The protein resides in the cytoplasmic vesicle. The protein localises to the secretory vesicle. Functionally, neurotensin may play an endocrine or paracrine role in the regulation of fat metabolism. It causes contraction of smooth muscle. The sequence is that of Neurotensin/neuromedin N (Nts) from Mus musculus (Mouse).